The sequence spans 353 residues: Photosystem II protein D1 (353 aa).

T2 is modified (N-acetylthreonine). T2 carries the phosphothreonine modification. Helical transmembrane passes span Y29 to S46, H118 to L133, and W142 to A156. H118 is a binding site for chlorophyll a. Y126 is a binding site for pheophytin a. [CaMn4O5] cluster-binding residues include D170 and E189. The helical transmembrane segment at F197–L218 threads the bilayer. H198 contacts chlorophyll a. A quinone-binding positions include H215 and S264–F265. Fe cation is bound at residue H215. A Fe cation-binding site is contributed by H272. A helical membrane pass occupies residues F274–L288. Residues H332, E333, D342, and A344 each coordinate [CaMn4O5] cluster. A propeptide spanning residues A345–G353 is cleaved from the precursor.

It belongs to the reaction center PufL/M/PsbA/D family. In terms of assembly, PSII is composed of 1 copy each of membrane proteins PsbA, PsbB, PsbC, PsbD, PsbE, PsbF, PsbH, PsbI, PsbJ, PsbK, PsbL, PsbM, PsbT, PsbX, PsbY, PsbZ, Psb30/Ycf12, at least 3 peripheral proteins of the oxygen-evolving complex and a large number of cofactors. It forms dimeric complexes. The cofactor is The D1/D2 heterodimer binds P680, chlorophylls that are the primary electron donor of PSII, and subsequent electron acceptors. It shares a non-heme iron and each subunit binds pheophytin, quinone, additional chlorophylls, carotenoids and lipids. D1 provides most of the ligands for the Mn4-Ca-O5 cluster of the oxygen-evolving complex (OEC). There is also a Cl(-1) ion associated with D1 and D2, which is required for oxygen evolution. The PSII complex binds additional chlorophylls, carotenoids and specific lipids.. In terms of processing, tyr-161 forms a radical intermediate that is referred to as redox-active TyrZ, YZ or Y-Z. Post-translationally, C-terminally processed by CTPA; processing is essential to allow assembly of the oxygen-evolving complex and thus photosynthetic growth.

The protein localises to the plastid. It localises to the chloroplast thylakoid membrane. The enzyme catalyses 2 a plastoquinone + 4 hnu + 2 H2O = 2 a plastoquinol + O2. Photosystem II (PSII) is a light-driven water:plastoquinone oxidoreductase that uses light energy to abstract electrons from H(2)O, generating O(2) and a proton gradient subsequently used for ATP formation. It consists of a core antenna complex that captures photons, and an electron transfer chain that converts photonic excitation into a charge separation. The D1/D2 (PsbA/PsbD) reaction center heterodimer binds P680, the primary electron donor of PSII as well as several subsequent electron acceptors. The chain is Photosystem II protein D1 from Lotus japonicus (Lotus corniculatus var. japonicus).